Here is a 906-residue protein sequence, read N- to C-terminus: Aconitate hydratase A (906 aa).

3 residues coordinate [4Fe-4S] cluster: Cys443, Cys509, and Cys512.

It belongs to the aconitase/IPM isomerase family. In terms of assembly, monomer. The cofactor is [4Fe-4S] cluster.

The enzyme catalyses citrate = D-threo-isocitrate. It carries out the reaction (2S,3R)-3-hydroxybutane-1,2,3-tricarboxylate = 2-methyl-cis-aconitate + H2O. It functions in the pathway carbohydrate metabolism; tricarboxylic acid cycle; isocitrate from oxaloacetate: step 2/2. Its pathway is organic acid metabolism; propanoate degradation. Functionally, involved in the catabolism of short chain fatty acids (SCFA) via the tricarboxylic acid (TCA)(acetyl degradation route) and probably via the 2-methylcitrate cycle I (propionate degradation route). Catalyzes the reversible isomerization of citrate to isocitrate via cis-aconitate. Could catalyze the hydration of 2-methyl-cis-aconitate to yield (2R,3S)-2-methylisocitrate. The apo form of AcnA functions as a RNA-binding regulatory protein. The protein is Aconitate hydratase A of Bradyrhizobium diazoefficiens (strain JCM 10833 / BCRC 13528 / IAM 13628 / NBRC 14792 / USDA 110).